Consider the following 318-residue polypeptide: Ribose-phosphate pyrophosphokinase 1 (318 aa).

ATP is bound by residues 43–45 (DGE) and 102–103 (RQ). The Mg(2+) site is built by His136 and Asp176. The active site involves Lys199. Residues Arg201, Asp225, and 229 to 233 (DTAGT) contribute to the D-ribose 5-phosphate site.

This sequence belongs to the ribose-phosphate pyrophosphokinase family. Class I subfamily. As to quaternary structure, homohexamer. It depends on Mg(2+) as a cofactor.

The protein resides in the cytoplasm. It catalyses the reaction D-ribose 5-phosphate + ATP = 5-phospho-alpha-D-ribose 1-diphosphate + AMP + H(+). It functions in the pathway metabolic intermediate biosynthesis; 5-phospho-alpha-D-ribose 1-diphosphate biosynthesis; 5-phospho-alpha-D-ribose 1-diphosphate from D-ribose 5-phosphate (route I): step 1/1. Its function is as follows. Involved in the biosynthesis of the central metabolite phospho-alpha-D-ribosyl-1-pyrophosphate (PRPP) via the transfer of pyrophosphoryl group from ATP to 1-hydroxyl of ribose-5-phosphate (Rib-5-P). This chain is Ribose-phosphate pyrophosphokinase 1, found in Listeria monocytogenes serotype 4b (strain F2365).